An 833-amino-acid chain; its full sequence is MLLSTYLNWASVLLTIAGAESNIDPWDEVSSFLQGKLRKLDVTNPNAYDMNDNEQDATFYVSMDYHEEEERSEYESVWQYYNENSDQDWHKSVYDKLQVSADQFNNTEAMYKLSQINLWGQYGYPHNKSVAFQYLQKFNDMTSYENSSALFDLAVAYSTGLFGTLPVDVARGLLYFQRSARLGDLKAKQVLAYRYFSGYSVARDVDKALLLYKEIAEEIKKKYSEEQWNMVFPYIESYIVRIPDFDEGLLGKGLSTVPQSVRRKKTTRPPFAGSSNLKPIGDVGYGEVVMQFKFNAGNGNPGSFVISDSEHEDRLVELFYTAWDLYKGTYTRGRDCDKAKRLLLQVYKTYDAEVKYMDNLQKFFYVKSLDLLAHMYFTGEGFERPNVQAALDLFDRSEKILEGAEISRTASEVDKGLISQYYFNNTLGALKHYKKAKESGNAHGILFYQLGKLSEKNPELKIGDPYLYMQEASSQQYLPAQYEFAKMVESNELRKYSVEDITRLYKAFVEENENIMAPHLRLGFSELLGGSSEVSLYAYAQAAEQGYEAAQISAAYLLYQLPYKFDDPPETTIERKTMAISYYTRAFKQGNTDAAVVAGDIYFQMKNYTKALSLYQSAALKFSAQALWNIGYMYEHGLGVEKDFHLAKRFYDQILEHNQKLYFAVKASVMKLQLKSWFMWLNGKELDNISIDQEQESTVVRPFFDRLVQLLKNLSRETRGDNKKKNQHRILKEKKTPSQGIMERFGLQTEDLLTMVCVLIIFAISMFFRTVAPRGQWNVRINGVNIAGGNALGEEGNPENENEEDDENDDEGRARARNNFGFGNNFDVQVFAI.

Residues 1–19 form the signal peptide; it reads MLLSTYLNWASVLLTIAGA. Asparagine 105, asparagine 127, and asparagine 146 each carry an N-linked (GlcNAc...) asparagine glycan. The stretch at 107 to 143 is one Sel1-like 1 repeat; the sequence is TEAMYKLSQINLWGQYGYPHNKSVAFQYLQKFNDMTS. Sel1-like repeat units follow at residues 147-184 and 185-220; these read SSALFDLAVAYSTGLFGTLPVDVARGLLYFQRSARLGD and LKAKQVLAYRYFSGYSVARDVDKALLLYKEIAEEIK. 2 N-linked (GlcNAc...) asparagine glycosylation sites follow: asparagine 424 and asparagine 607. Sel1-like repeat units lie at residues 592–623 and 624–659; these read TDAAVVAGDIYFQMKNYTKALSLYQSAALKFS and AQALWNIGYMYEHGLGVEKDFHLAKRFYDQILEHNQ. Residues asparagine 688 and asparagine 713 are each glycosylated (N-linked (GlcNAc...) asparagine). The helical transmembrane segment at 752–772 threads the bilayer; sequence LLTMVCVLIIFAISMFFRTVA. The interval 789–818 is disordered; the sequence is GNALGEEGNPENENEEDDENDDEGRARARN. Over residues 796-810 the composition is skewed to acidic residues; that stretch reads GNPENENEEDDENDD.

Belongs to the sel-1 family. As to quaternary structure, interacts with HRD1.

The protein resides in the endoplasmic reticulum membrane. Functionally, component of the endoplasmic reticulum quality control (ERQC) system involved in ubiquitin-dependent degradation of missfolded endoplasmic reticulum proteins. Component of the HRD1 ubiquitin ligase complex, which is part of the ERAD-L and ERAD-M pathways responsible for the rapid degradation of soluble lumenal and membrane proteins with misfolded lumenal domains (ERAD-L), or ER-membrane proteins with misfolded transmembrane domains (ERAD-M). ERAD-L substrates are ubiquitinated through HRD1 in conjunction with the E2 ubiquitin-conjugating enzymes UBC1 and UBC7-CUE1. Ubiquitinated substrates are then removed to the cytosol via the action of the UFD1-NPL4-CDC48/p97 (UNC) AAA ATPase complex and targeted to the proteasome. ERAD-M substrates are processed by the same HRD1-HRD3 core complex, but only a subset of the other components is required for ERAD-M. Stabilizes the HRD1 ubiquitin-protein ligase. Also has a function in recruiting misfolded protein substrates. This is ERAD-associated E3 ubiquitin-protein ligase component HRD3 (HRD3) from Candida glabrata (strain ATCC 2001 / BCRC 20586 / JCM 3761 / NBRC 0622 / NRRL Y-65 / CBS 138) (Yeast).